The following is a 430-amino-acid chain: Cytochrome P450 monooxygenase FGSG_15680 (430 aa).

Cys351 is a binding site for heme.

It belongs to the cytochrome P450 family. Requires heme as cofactor.

The protein operates within mycotoxin biosynthesis. Its function is as follows. Cytochrome P450 monooxygenase; part of the gene cluster that mediates the biosynthesis of gramillins A and B, bicyclic lipopeptides that induce cell death in maize leaves but not in wheat leaves. The nonribosomal peptide synthetase GRA1 incorporates respectively a glutamic adic (Glu), a leucine (Leu), a serine (Ser), a hydroxyglutamine (HOGln), a 2-amino decanoic acid, and 2 cysteins (CysB and CysA). The biosynthesis of 2-amino decanoic acid incorporated in gramillins could be initiated by a fatty acid synthase composed of the alpha and beta subunits FGSG_00036 and FGSG_11656. The cytochrome P450 monooxygenase FGSG_15680 could hydroxylate the fatty acid chain. Subsequent oxidation to the ketone by the oxidoreductase FGSG_00048 and transamination by aminotransferase FGSG_00049 could form 2-amino-decanoic acid. On the other hand, FGSG_15680 could also be responsible for the HO-modified glutamine at the gamma-position. Whether hydroxylation occurs on the fully assembled product or on the Gln residue prior to assembly into the gramillins requires further proof. The thioredoxin FGSG_00043 could also be required for the disulfide-bond formation between CysA and CysB. The specific involvement of the remaining proteins from the cluster is more difficult to discern, but could have broader regulatory (FGSG_00040 and FGSG_11657) or enzymatic functions (FGSG_00044 and FGSG_00045). The final C-domain of GRA1 does not possess the expected sequence of a termination CT domain, often implicated in macrocyclization and release of a cyclopeptidein fungal NRPs; and the thioesterase FGSG_00047 may act in concert with the terminal C-domain of GRA1 to catalyze the formation of the macrocyclic anhydride and release of the products. The sequence is that of Cytochrome P450 monooxygenase FGSG_15680 from Gibberella zeae (strain ATCC MYA-4620 / CBS 123657 / FGSC 9075 / NRRL 31084 / PH-1) (Wheat head blight fungus).